A 25-amino-acid chain; its full sequence is ATP synthase subunit alpha, mitochondrial (25 aa).

It belongs to the ATPase alpha/beta chains family. In terms of assembly, F-type ATPases have 2 components, CF(1) - the catalytic core - and CF(0) - the membrane proton channel. CF(1) has five subunits: alpha(3), beta(3), gamma(1), delta(1), epsilon(1). CF(0) has three main subunits: a, b and c.

It localises to the mitochondrion. Its subcellular location is the mitochondrion inner membrane. Its function is as follows. Mitochondrial membrane ATP synthase (F(1)F(0) ATP synthase or Complex V) produces ATP from ADP in the presence of a proton gradient across the membrane which is generated by electron transport complexes of the respiratory chain. F-type ATPases consist of two structural domains, F(1) - containing the extramembraneous catalytic core, and F(0) - containing the membrane proton channel, linked together by a central stalk and a peripheral stalk. During catalysis, ATP synthesis in the catalytic domain of F(1) is coupled via a rotary mechanism of the central stalk subunits to proton translocation. Subunits alpha and beta form the catalytic core in F(1). Rotation of the central stalk against the surrounding alpha(3)beta(3) subunits leads to hydrolysis of ATP in three separate catalytic sites on the beta subunits. Subunit alpha does not bear the catalytic high-affinity ATP-binding sites. This Spinacia oleracea (Spinach) protein is ATP synthase subunit alpha, mitochondrial (ATPA).